A 357-amino-acid chain; its full sequence is 3-isopropylmalate dehydrogenase (357 aa).

Arg-97, Arg-107, Arg-135, and Asp-224 together coordinate substrate. Positions 224, 248, and 252 each coordinate Mg(2+). 282-294 provides a ligand contact to NAD(+); sequence GSAPDIAGKNIAN.

This sequence belongs to the isocitrate and isopropylmalate dehydrogenases family. LeuB type 1 subfamily. In terms of assembly, homodimer. Requires Mg(2+) as cofactor. The cofactor is Mn(2+).

Its subcellular location is the cytoplasm. It catalyses the reaction (2R,3S)-3-isopropylmalate + NAD(+) = 4-methyl-2-oxopentanoate + CO2 + NADH. The protein operates within amino-acid biosynthesis; L-leucine biosynthesis; L-leucine from 3-methyl-2-oxobutanoate: step 3/4. Its function is as follows. Catalyzes the oxidation of 3-carboxy-2-hydroxy-4-methylpentanoate (3-isopropylmalate) to 3-carboxy-4-methyl-2-oxopentanoate. The product decarboxylates to 4-methyl-2 oxopentanoate. In Prochlorococcus marinus (strain MIT 9312), this protein is 3-isopropylmalate dehydrogenase.